The chain runs to 130 residues: Small ribosomal subunit protein uS9 (130 aa).

Residues threonine 105–arginine 130 are disordered. A compositionally biased stretch (basic residues) spans lysine 111–arginine 130.

It belongs to the universal ribosomal protein uS9 family.

This Listeria welshimeri serovar 6b (strain ATCC 35897 / DSM 20650 / CCUG 15529 / CIP 8149 / NCTC 11857 / SLCC 5334 / V8) protein is Small ribosomal subunit protein uS9.